The following is a 592-amino-acid chain: Arginine--tRNA ligase (592 aa).

The 'HIGH' region motif lies at 112-122 (VNPNKELHVGH).

The protein belongs to the class-I aminoacyl-tRNA synthetase family. Monomer.

The protein localises to the cytoplasm. The enzyme catalyses tRNA(Arg) + L-arginine + ATP = L-arginyl-tRNA(Arg) + AMP + diphosphate. This Thermus thermophilus (strain ATCC 27634 / DSM 579 / HB8) protein is Arginine--tRNA ligase.